Here is a 158-residue protein sequence, read N- to C-terminus: Na(+)/H(+) antiporter subunit E (158 aa).

2 consecutive transmembrane segments (helical) span residues 21–41 (SPSA…LFFF) and 51–71 (LWKL…LYLA).

This sequence belongs to the CPA3 antiporters (TC 2.A.63) subunit E family. As to quaternary structure, forms a heterooligomeric complex that consists of seven subunits: MrpA, MrpB, MrpC, MrpD, MrpE, MrpF and MrpG.

It is found in the cell membrane. Mrp complex is a Na(+)/H(+) antiporter that is considered to be the major Na(+) excretion system in B.subtilis. Has a major role in Na(+) resistance and a minor role in Na(+)- and K(+)-dependent pH homeostasis as compared to TetB. MrpA may be the actual Na(+)/H(+) antiporter, although the six other Mrp proteins are all required for Na(+)/H(+) antiport activity and Na(+) resistance. MrpA is required for initiation of sporulation when external Na(+) concentration increases. Also transports Li(+) but not K(+), Ca(2+) or Mg(2+). The sequence is that of Na(+)/H(+) antiporter subunit E (mrpE) from Bacillus subtilis (strain 168).